A 98-amino-acid polypeptide reads, in one-letter code: MKIIKEAVAGTLESSDLLVKVAPGLPDRLDIHIRSEVMRQFGAHIRAVIDDTLGKLGVTEGDVTVEDKGALDCAIRARLQTAVLRSVGDVKIEWEKLQ.

Ser-14 is modified (O-(phosphoribosyl dephospho-coenzyme A)serine).

The protein belongs to the CitD family. In terms of assembly, oligomer with a subunit composition of (alpha,beta,gamma)6.

Its subcellular location is the cytoplasm. Its function is as follows. Covalent carrier of the coenzyme of citrate lyase. This Albidiferax ferrireducens (strain ATCC BAA-621 / DSM 15236 / T118) (Rhodoferax ferrireducens) protein is Citrate lyase acyl carrier protein.